The chain runs to 104 residues: UPF0473 protein SH1304 (104 aa).

Belongs to the UPF0473 family.

This Staphylococcus haemolyticus (strain JCSC1435) protein is UPF0473 protein SH1304.